Consider the following 186-residue polypeptide: Large ribosomal subunit protein uL10 (186 aa).

Belongs to the universal ribosomal protein uL10 family. In terms of assembly, part of the ribosomal stalk of the 50S ribosomal subunit. The N-terminus interacts with L11 and the large rRNA to form the base of the stalk. The C-terminus forms an elongated spine to which L12 dimers bind in a sequential fashion forming a multimeric L10(L12)X complex.

In terms of biological role, forms part of the ribosomal stalk, playing a central role in the interaction of the ribosome with GTP-bound translation factors. The polypeptide is Large ribosomal subunit protein uL10 (rplJ) (Streptomyces virginiae (Streptomyces cinnamonensis)).